Here is a 370-residue protein sequence, read N- to C-terminus: GTPase Obg (370 aa).

Residues 1–159 (MKFIDEARIE…RMLKLELKVL (159 aa)) enclose the Obg domain. Residues 128 to 147 (LHFKSSTNRAPRQKTDGKPG) form a disordered region. One can recognise an OBG-type G domain in the interval 160 to 334 (ADVGLLGMPN…LCYAIYDYLS (175 aa)). Residues 166-173 (GMPNAGKS), 191-195 (FTTLA), 213-216 (DIPG), 284-287 (NKLD), and 315-317 (SAL) contribute to the GTP site. Mg(2+) contacts are provided by S173 and T193.

Belongs to the TRAFAC class OBG-HflX-like GTPase superfamily. OBG GTPase family. In terms of assembly, monomer. Mg(2+) is required as a cofactor.

The protein resides in the cytoplasm. An essential GTPase which binds GTP, GDP and possibly (p)ppGpp with moderate affinity, with high nucleotide exchange rates and a fairly low GTP hydrolysis rate. Plays a role in control of the cell cycle, stress response, ribosome biogenesis and in those bacteria that undergo differentiation, in morphogenesis control. The protein is GTPase Obg of Burkholderia cenocepacia (strain ATCC BAA-245 / DSM 16553 / LMG 16656 / NCTC 13227 / J2315 / CF5610) (Burkholderia cepacia (strain J2315)).